The primary structure comprises 474 residues: Kynureninase 2 (474 aa).

Pyridoxal 5'-phosphate is bound by residues L144, T145, 172-175 (FPSD), D258, H261, and Y283. K284 is subject to N6-(pyridoxal phosphate)lysine. Pyridoxal 5'-phosphate is bound by residues W323 and T351.

It belongs to the kynureninase family. In terms of assembly, homodimer. Pyridoxal 5'-phosphate is required as a cofactor.

It localises to the cytoplasm. The catalysed reaction is L-kynurenine + H2O = anthranilate + L-alanine + H(+). The enzyme catalyses 3-hydroxy-L-kynurenine + H2O = 3-hydroxyanthranilate + L-alanine + H(+). It functions in the pathway amino-acid degradation; L-kynurenine degradation; L-alanine and anthranilate from L-kynurenine: step 1/1. The protein operates within cofactor biosynthesis; NAD(+) biosynthesis; quinolinate from L-kynurenine: step 2/3. In terms of biological role, catalyzes the cleavage of L-kynurenine (L-Kyn) and L-3-hydroxykynurenine (L-3OHKyn) into anthranilic acid (AA) and 3-hydroxyanthranilic acid (3-OHAA), respectively. This is Kynureninase 2 (bna5-2) from Emericella nidulans (strain FGSC A4 / ATCC 38163 / CBS 112.46 / NRRL 194 / M139) (Aspergillus nidulans).